The following is a 630-amino-acid chain: Probable potassium transport system protein Kup 2 (630 aa).

12 helical membrane passes run 14–34, 56–76, 108–128, 145–165, 176–196, 214–234, 255–275, 293–313, 352–372, 375–395, 402–422, and 427–447; these read ATGF…DIGT, VIVL…VTAK, VPLL…SMIT, PALQ…LFAF, AFGP…LLHI, FMLS…LAVT, WLFF…AMVL, LLVP…QAVI, MLLL…SALA, YGIA…VVVW, PAAA…FFSA, and LMEG…LVWT.

The protein belongs to the HAK/KUP transporter (TC 2.A.72) family.

It localises to the cell inner membrane. The catalysed reaction is K(+)(in) + H(+)(in) = K(+)(out) + H(+)(out). In terms of biological role, transport of potassium into the cell. Likely operates as a K(+):H(+) symporter. The protein is Probable potassium transport system protein Kup 2 of Rhodopseudomonas palustris (strain BisA53).